Here is a 214-residue protein sequence, read N- to C-terminus: Adenylate kinase (214 aa).

10–15 (GAGKGT) serves as a coordination point for ATP. Residues 30-59 (STGDMFREAVASKSELGKKVEEILKRGDLV) form an NMP region. Residues Thr-31, Arg-36, 57–59 (DLV), 85–88 (GFPR), and Gln-92 contribute to the AMP site. Residues 126 to 163 (NRRICSNCGKIYNLITLPPKVDGKCDVCGGTLYQREDD) form an LID region. Arg-127 is a binding site for ATP. 2 residues coordinate Zn(2+): Cys-130 and Cys-133. 136–137 (IY) is a binding site for ATP. Zn(2+) is bound by residues Cys-150 and Cys-153. Arg-160 and Arg-171 together coordinate AMP. Leu-199 lines the ATP pocket.

This sequence belongs to the adenylate kinase family. As to quaternary structure, monomer.

It is found in the cytoplasm. It carries out the reaction AMP + ATP = 2 ADP. It participates in purine metabolism; AMP biosynthesis via salvage pathway; AMP from ADP: step 1/1. Catalyzes the reversible transfer of the terminal phosphate group between ATP and AMP. Plays an important role in cellular energy homeostasis and in adenine nucleotide metabolism. This chain is Adenylate kinase, found in Thermosipho africanus (strain TCF52B).